The primary structure comprises 224 residues: UPF0758 protein Mmwyl1_0624 (224 aa).

The MPN domain occupies 102–224; the sequence is VFASAEHVRT…PVSLAERGLV (123 aa). Residues H173, H175, and D186 each coordinate Zn(2+). The short motif at 173–186 is the JAMM motif element; the sequence is HNHPSGIAEPSQAD.

The protein belongs to the UPF0758 family.

The polypeptide is UPF0758 protein Mmwyl1_0624 (Marinomonas sp. (strain MWYL1)).